The chain runs to 151 residues: Chaperonin GroEL (151 aa).

An ATP-binding site is contributed by 41–45 (DGTTT).

The protein belongs to the chaperonin (HSP60) family. In terms of assembly, forms a cylinder of 14 subunits composed of two heptameric rings stacked back-to-back. Interacts with the co-chaperonin GroES.

It is found in the cytoplasm. It catalyses the reaction ATP + H2O + a folded polypeptide = ADP + phosphate + an unfolded polypeptide.. In terms of biological role, together with its co-chaperonin GroES, plays an essential role in assisting protein folding. The GroEL-GroES system forms a nano-cage that allows encapsulation of the non-native substrate proteins and provides a physical environment optimized to promote and accelerate protein folding. This Mycobacteroides chelonae (Mycobacterium chelonae) protein is Chaperonin GroEL.